The primary structure comprises 461 residues: Mannan endo-1,4-beta-mannosidase 4 (461 aa).

Substrate is bound by residues Trp-80 and Asn-195. Glu-196 acts as the Proton donor in catalysis. A substrate-binding site is contributed by Tyr-274. Glu-314 serves as the catalytic Nucleophile. 2 residues coordinate substrate: Trp-357 and Asp-364.

The protein belongs to the glycosyl hydrolase 5 (cellulase A) family. As to expression, ubiquitous.

The enzyme catalyses Random hydrolysis of (1-&gt;4)-beta-D-mannosidic linkages in mannans, galactomannans and glucomannans.. The protein is Mannan endo-1,4-beta-mannosidase 4 (MAN4) of Oryza sativa subsp. japonica (Rice).